Reading from the N-terminus, the 575-residue chain is FAD-linked oxidoreductase asqF (575 aa).

The first 23 residues, 1–23 (MALFRLSAAIVVIFLYIWSPSQR), serve as a signal peptide directing secretion. 2 N-linked (GlcNAc...) asparagine glycosylation sites follow: N45 and N80. The region spanning 118–306 (NQGRIPLYAA…VRVTMRTYPD (189 aa)) is the FAD-binding PCMH-type domain. A Pros-8alpha-FAD histidine modification is found at H156. N370 carries an N-linked (GlcNAc...) asparagine glycan.

This sequence belongs to the oxygen-dependent FAD-linked oxidoreductase family. It depends on FAD as a cofactor.

The catalysed reaction is peniprequinolone + A = yaequinolone E + AH2. It participates in secondary metabolite biosynthesis. It functions in the pathway alkaloid biosynthesis. Its pathway is mycotoxin biosynthesis. Functionally, FAD-linked oxidoreductase; part of the gene cluster that mediates the biosynthesis of the aspoquinolone mycotoxins. Within the pathway, asqF performs FAD-dependent dehydrogenation of the dimethylallyl quinolone peniprequinolone to yield the conjugated aryl diene yaequinolone E. The first step of the pathway is catalyzed by the nonribosomal peptide synthetase asqK that condenses anthranilic acid and O-methyl-L-tyrosine to produce 4'-methoxycyclopeptin. 4'-methoxycyclopeptin is then converted to 4'-methoxydehydrocyclopeptin by the ketoglutarate-dependent dioxygenase asqJ. AsqJ also converts its first product 4'-methoxydehydrocyclopeptin to 4'-methoxycyclopenin. The following conversion of 4'-methoxycyclopenin into 4'-methoxyviridicatin is catalyzed by the cyclopenase asqI. 4'-methoxyviridicatin is the precursor of quinolone natural products, and is further converted to quinolinone B. The prenyltransferase asqH1 then catalyzes the canonical Friedel-Crafts alkylation of quinolinone B with dimethylallyl cation to yield dimethylallyl quinolone, which is subjected to FAD-dependent dehydrogenation by the FAD-linked oxidoreductase asqF to yield conjugated aryl diene. The delta(3') double bond then serves as the site of the second alkylation with DMAPP catalyzed by the prenyltransferase asqH2 to yield a carbenium ion intermediate, which can be attacked by H(2)O to yield a styrenyl quinolone containing a C3'-hydroxyprenyl chain. The FAD-dependent monooxygenase asqG performs epoxidation of the terminal C7'-C8' olefin. Finally, after dehydratation of the epoxide at C3 by asqC, the quinolone epoxide rearrangement protein asqO catalyzes an enzymatic 3-exo-tet cyclization to yield the cyclopropyl-THF ring system in aspoquinolone. The chain is FAD-linked oxidoreductase asqF from Emericella nidulans (strain FGSC A4 / ATCC 38163 / CBS 112.46 / NRRL 194 / M139) (Aspergillus nidulans).